Here is a 361-residue protein sequence, read N- to C-terminus: S-adenosylmethionine decarboxylase proenzyme (361 aa).

Active-site residues include glutamate 13 and glutamate 16. The Schiff-base intermediate with substrate; via pyruvic acid role is filled by serine 73. Serine 73 is subject to Pyruvic acid (Ser); by autocatalysis. Cysteine 87 (proton donor; for catalytic activity) is an active-site residue. Catalysis depends on proton acceptor; for processing activity residues serine 236 and histidine 249.

Belongs to the eukaryotic AdoMetDC family. It depends on pyruvate as a cofactor. Is synthesized initially as an inactive proenzyme. Formation of the active enzyme involves a self-maturation process in which the active site pyruvoyl group is generated from an internal serine residue via an autocatalytic post-translational modification. Two non-identical subunits are generated from the proenzyme in this reaction, and the pyruvate is formed at the N-terminus of the alpha chain, which is derived from the carboxyl end of the proenzyme. The post-translation cleavage follows an unusual pathway, termed non-hydrolytic serinolysis, in which the side chain hydroxyl group of the serine supplies its oxygen atom to form the C-terminus of the beta chain, while the remainder of the serine residue undergoes an oxidative deamination to produce ammonia and the pyruvoyl group blocking the N-terminus of the alpha chain.

It catalyses the reaction S-adenosyl-L-methionine + H(+) = S-adenosyl 3-(methylsulfanyl)propylamine + CO2. It functions in the pathway amine and polyamine biosynthesis; S-adenosylmethioninamine biosynthesis; S-adenosylmethioninamine from S-adenosyl-L-methionine: step 1/1. This Nicotiana sylvestris (Wood tobacco) protein is S-adenosylmethionine decarboxylase proenzyme (SAMDC1).